A 316-amino-acid chain; its full sequence is Homoserine kinase (316 aa).

Pro97–Ser107 serves as a coordination point for ATP.

The protein belongs to the GHMP kinase family. Homoserine kinase subfamily.

The protein localises to the cytoplasm. The enzyme catalyses L-homoserine + ATP = O-phospho-L-homoserine + ADP + H(+). Its pathway is amino-acid biosynthesis; L-threonine biosynthesis; L-threonine from L-aspartate: step 4/5. Functionally, catalyzes the ATP-dependent phosphorylation of L-homoserine to L-homoserine phosphate. The chain is Homoserine kinase from Prochlorococcus marinus (strain MIT 9313).